Reading from the N-terminus, the 313-residue chain is MLEKQSVNQKEQYNFNKLQKRLRRNVGQAIADFNMIEEGDRVMVCLSGGKDSYTMLDILQSLQKSAPINFSLIAVNLDQKQPGFPEDILPAYLDKQGVEYKIVEENTYGIVKEIIPEGKTTCSLCSRLRRGILYRTATELGATKIALGHHRDDILQTLFLNMFYGGKLKGMPPKLMSDDGKHIVIRPLAYCREKDIERFAVAREYPIIPCNLCGSQPNLQRQVIKDMLRDWDKQYPGRIETMFSAMQNVVPSHLNDHKLFDFKSITHDSDIIDGGDLAFDREALPLNPVGWQPEDDEDTEKRPPVRLDVLEIK.

The short motif at 47–52 (SGGKDS) is the PP-loop motif element. The [4Fe-4S] cluster site is built by C122, C125, and C213. The segment at 288 to 313 (PVGWQPEDDEDTEKRPPVRLDVLEIK) is disordered. Over residues 299-313 (TEKRPPVRLDVLEIK) the composition is skewed to basic and acidic residues.

The protein belongs to the TtcA family. Homodimer. Mg(2+) is required as a cofactor. Requires [4Fe-4S] cluster as cofactor.

The protein localises to the cytoplasm. It carries out the reaction cytidine(32) in tRNA + S-sulfanyl-L-cysteinyl-[cysteine desulfurase] + AH2 + ATP = 2-thiocytidine(32) in tRNA + L-cysteinyl-[cysteine desulfurase] + A + AMP + diphosphate + H(+). It functions in the pathway tRNA modification. Its function is as follows. Catalyzes the ATP-dependent 2-thiolation of cytidine in position 32 of tRNA, to form 2-thiocytidine (s(2)C32). The sulfur atoms are provided by the cysteine/cysteine desulfurase (IscS) system. The chain is tRNA-cytidine(32) 2-sulfurtransferase from Yersinia pseudotuberculosis serotype O:1b (strain IP 31758).